The chain runs to 293 residues: Ethanolamine ammonia-lyase small subunit (293 aa).

Adenosylcob(III)alamin is bound by residues valine 207 and glutamate 228.

Belongs to the EutC family. As to quaternary structure, the basic unit is a heterodimer which dimerizes to form tetramers. The heterotetramers trimerize; 6 large subunits form a core ring with 6 small subunits projecting outwards. Adenosylcob(III)alamin serves as cofactor.

The protein resides in the bacterial microcompartment. The catalysed reaction is ethanolamine = acetaldehyde + NH4(+). It functions in the pathway amine and polyamine degradation; ethanolamine degradation. Catalyzes the deamination of various vicinal amino-alcohols to oxo compounds. Allows this organism to utilize ethanolamine as the sole source of nitrogen and carbon in the presence of external vitamin B12. This is Ethanolamine ammonia-lyase small subunit from Listeria innocua serovar 6a (strain ATCC BAA-680 / CLIP 11262).